The following is a 484-amino-acid chain: Malonate-semialdehyde dehydrogenase 2 (484 aa).

Residues Phe-153, Lys-177, Glu-180, Arg-181, Ser-230, and Thr-252 each coordinate NAD(+). The Nucleophile role is filled by Cys-285. NAD(+) is bound at residue Glu-385.

Belongs to the aldehyde dehydrogenase family. IolA subfamily. In terms of assembly, homotetramer.

The enzyme catalyses 3-oxopropanoate + NAD(+) + CoA + H2O = hydrogencarbonate + acetyl-CoA + NADH + H(+). It carries out the reaction 2-methyl-3-oxopropanoate + NAD(+) + CoA + H2O = propanoyl-CoA + hydrogencarbonate + NADH + H(+). The protein operates within polyol metabolism; myo-inositol degradation into acetyl-CoA; acetyl-CoA from myo-inositol: step 7/7. Catalyzes the oxidation of malonate semialdehyde (MSA) and methylmalonate semialdehyde (MMSA) into acetyl-CoA and propanoyl-CoA, respectively. Is involved in a myo-inositol catabolic pathway. Bicarbonate, and not CO2, is the end-product of the enzymatic reaction. The protein is Malonate-semialdehyde dehydrogenase 2 of Geobacillus kaustophilus (strain HTA426).